The sequence spans 330 residues: MLQSTKVTKSVLTNVLRVEQRRGFLLSGAAVALGSTYIFGRDAKLADAMDRGELHNKNEDYAKLRAERTEQRIKALSNNRPMEPRYEGHVPLYLHEKMLLFAISGIRAFFHPENGINIVQLGEATAFPIFLENLKQTMLADETGRRILRDQPNVRTDILDMDKLSKLPKNTFGYTFYKWLEKEKVSPDTRAPVTYIDDPIHAFVFKRYRQCHDFYHALNDLPIIIEGEIIVKALESANMGIPMATLGWMLAPLRLKKAQRDRLYGTYLPWAIKTGLTCKPLINVYWEELLEKDVEELRQELGIKMPPDLRAMRAKRKAMIKRLNEKYQKN.

The N-terminal 31 residues, 1–31 (MLQSTKVTKSVLTNVLRVEQRRGFLLSGAAV), are a transit peptide targeting the mitochondrion. Zn(2+)-binding residues include H212, D213, H216, and E228.

It belongs to the COQ4 family. In terms of assembly, component of a multi-subunit COQ enzyme complex, composed of at least COQ3, COQ4, COQ5, COQ6, COQ7 and COQ9. Zn(2+) is required as a cofactor.

Its subcellular location is the mitochondrion inner membrane. The enzyme catalyses a 4-hydroxy-3-methoxy-5-(all-trans-polyprenyl)benzoate + H(+) = a 2-methoxy-6-(all-trans-polyprenyl)phenol + CO2. The protein operates within cofactor biosynthesis; ubiquinone biosynthesis. Functionally, lyase that catalyzes the C1-decarboxylation of 4-hydroxy-3-methoxy-5-(all-trans-polyprenyl)benzoic acid into 2-methoxy-6-(all-trans-polyprenyl)phenol during ubiquinone biosynthesis. The protein is Ubiquinone biosynthesis protein COQ4, mitochondrial of Candida glabrata (strain ATCC 2001 / BCRC 20586 / JCM 3761 / NBRC 0622 / NRRL Y-65 / CBS 138) (Yeast).